The following is a 432-amino-acid chain: Glutamate-1-semialdehyde 2,1-aminomutase (432 aa).

K270 carries the post-translational modification N6-(pyridoxal phosphate)lysine.

Belongs to the class-III pyridoxal-phosphate-dependent aminotransferase family. HemL subfamily. In terms of assembly, homodimer. It depends on pyridoxal 5'-phosphate as a cofactor.

The protein resides in the cytoplasm. The enzyme catalyses (S)-4-amino-5-oxopentanoate = 5-aminolevulinate. The protein operates within porphyrin-containing compound metabolism; protoporphyrin-IX biosynthesis; 5-aminolevulinate from L-glutamyl-tRNA(Glu): step 2/2. The protein is Glutamate-1-semialdehyde 2,1-aminomutase of Acinetobacter baumannii (strain ACICU).